We begin with the raw amino-acid sequence, 47 residues long: Delta-actitoxin-Ael1a (47 aa).

3 disulfides stabilise this stretch: Cys4–Cys44, Cys6–Cys34, and Cys27–Cys45.

The protein belongs to the sea anemone sodium channel inhibitory toxin family. Type I subfamily. Expressed in ectodermal glands. Not expressed in nematocytes.

Its subcellular location is the secreted. In terms of biological role, binds specifically to voltage-gated sodium channels (Nav), thereby delaying their inactivation during signal transduction. It strongly stimulates mammalian cardiac muscle contraction. Paralyzes the shore crab (C.maenas) by tetanic contractions after intramuscular injection. In Anthopleura elegantissima (Green aggregating anemone), this protein is Delta-actitoxin-Ael1a.